Here is a 549-residue protein sequence, read N- to C-terminus: Chaperonin GroEL (549 aa).

Residues 30–33, Lys51, 87–91, Gly415, and Asp496 each bind ATP; these read TLGP and DGTTT.

It belongs to the chaperonin (HSP60) family. In terms of assembly, forms a cylinder of 14 subunits composed of two heptameric rings stacked back-to-back. Interacts with the co-chaperonin GroES.

Its subcellular location is the cytoplasm. The enzyme catalyses ATP + H2O + a folded polypeptide = ADP + phosphate + an unfolded polypeptide.. Its function is as follows. Together with its co-chaperonin GroES, plays an essential role in assisting protein folding. The GroEL-GroES system forms a nano-cage that allows encapsulation of the non-native substrate proteins and provides a physical environment optimized to promote and accelerate protein folding. The polypeptide is Chaperonin GroEL (Acidiphilium cryptum (strain JF-5)).